A 442-amino-acid chain; its full sequence is MKKIECACNFLMDKDAQGYIDLSDLDLTSCHFKGDVISKVSFLSSNLQHVTFECKEIGDCNFTTAIVDNVIFRCRRLHNVIFIKASGECVDFSKNILDTVDFSQSQLGHSNFRECQIRNSNFDNCYLYASHFTRAEFLSAKEISFIKSNLTAVMFDYVRMSTGNFKDCITEQLELTIDYSDIFWNEDLDGYINNIIKMIDTLPDNAMILKSVLAVKLVMQLKILNIVNKNFIENMKKIFSHCPYIKDPIIRSYIHSDEDNKFDDFMRQHRFSEVNFDTQQMIDFINRFNTNKWLIDKNNNFFIQLIDQALRSTDDMIKANVWHLYKEWIRSDDVSPIFIETEDNLRTFNTNELTRNDNIFILFSSVDDGPVMVVSSQRLHDMLNPTKDTNWNSTYIYKSRHEMLPVNLTQETLFSSKSHGKYALFPIFTASWRAHRIMNKGV.

This Escherichia coli (strain K12) protein is Putative protein YjbI (yjbI).